The following is a 600-amino-acid chain: UvrABC system protein C (600 aa).

One can recognise a GIY-YIG domain in the interval 15–92 (EKPGCYLMKD…IKKYQPYYNV (78 aa)). One can recognise a UVR domain in the interval 197 to 232 (GAVKQDLTQKMEQASEQLEFERAAEIRDQLKYIEET).

Belongs to the UvrC family. In terms of assembly, interacts with UvrB in an incision complex.

It is found in the cytoplasm. Its function is as follows. The UvrABC repair system catalyzes the recognition and processing of DNA lesions. UvrC both incises the 5' and 3' sides of the lesion. The N-terminal half is responsible for the 3' incision and the C-terminal half is responsible for the 5' incision. This is UvrABC system protein C from Lactobacillus helveticus (strain DPC 4571).